We begin with the raw amino-acid sequence, 221 residues long: Phosphate-specific transport system accessory protein PhoU homolog 1 (221 aa).

Belongs to the PhoU family. In terms of assembly, homodimer.

The protein localises to the cytoplasm. Its function is as follows. Plays a role in the regulation of phosphate uptake. In this role, it may bind, possibly as a chaperone, to PhoR, PhoP or a PhoR-PhoP complex to promote dephosphorylation of phospho-PhoP, or inhibit formation of the PhoR-PhoP transitory complex. The protein is Phosphate-specific transport system accessory protein PhoU homolog 1 (phoU1) of Mycobacterium bovis (strain ATCC BAA-935 / AF2122/97).